The following is a 174-amino-acid chain: Eukaryotic translation elongation factor 1 epsilon-1 (174 aa).

Residue A2 is modified to N-acetylalanine. The tract at residues 2–56 is N-terminal; that stretch reads AAAAELKLLEKSLGLRPGNKYSAQGERQIPVLQTNNGPSLTGLATIATHLVKQAS. Residues 50–173 enclose the GST C-terminal domain; the sequence is HLVKQASKEH…FIKNRLYANS (124 aa). Residues 57–63 are linker; that stretch reads KEHLLGS. Positions 64–152 are C-terminal; the sequence is TAEEKALVQQ…SRWFCHIQHY (89 aa). K138 carries the post-translational modification N6-acetyllysine. Residues 153 to 169 adopt a coiled-coil conformation; that stretch reads PDIRQHLSSVVFIKNRL.

Part of a multisubunit complex that groups tRNA ligases for Arg (RARS1), Asp (DARS1), Gln (QARS1), Ile (IARS1), Leu (LARS1), Lys (KARS1), Met (MARS1) the bifunctional ligase for Glu and Pro (EPRS1) and the auxiliary subunits AIMP1/p43, AIMP2/p38 and EEF1E1/p18. Can interact simultaneously with MARS1 and EPRS1. Forms a linear complex that contains MARS1, EEF1E1, EPRS1 and AIMP2 that is at the core of the multisubunit complex. Interacts with ATM and ATR. The interaction with ATM, which takes place independently of TP53, is induced by DNA damage that may occur during genotoxic stress or cell growth. The interaction with ATR is enhanced by UV irradiation.

The protein resides in the cytoplasm. It localises to the nucleus. Its function is as follows. Positive modulator of ATM response to DNA damage. This chain is Eukaryotic translation elongation factor 1 epsilon-1 (EEF1E1), found in Cricetulus griseus (Chinese hamster).